The sequence spans 148 residues: Protein ORM1 (148 aa).

4 helical membrane passes run W12–V32, W36–I56, F89–L109, and M111–T131.

To yeast YLR350W C-terminus.

Its subcellular location is the membrane. This is Protein ORM1 (ORM1) from Saccharomyces pastorianus (strain ATCC 76670 / Carlsberg bottom yeast no.2 / CBS 1503 / CLIB 180 / NBRC 10610 / NRRL Y-1525) (Saaz-type lager yeast).